A 144-amino-acid chain; its full sequence is Peptide methionine sulfoxide reductase MsrB (144 aa).

In terms of domain architecture, MsrB spans 5–128; sequence QEELRQRIGH…NSAALDFIPY (124 aa). Cysteine 117 (nucleophile) is an active-site residue.

This sequence belongs to the MsrB Met sulfoxide reductase family.

The enzyme catalyses L-methionyl-[protein] + [thioredoxin]-disulfide + H2O = L-methionyl-(R)-S-oxide-[protein] + [thioredoxin]-dithiol. The chain is Peptide methionine sulfoxide reductase MsrB from Streptococcus agalactiae serotype Ia (strain ATCC 27591 / A909 / CDC SS700).